Reading from the N-terminus, the 515-residue chain is Alpha-1B adrenergic receptor (515 aa).

Topologically, residues 1–45 (MNPDLDTGHNTSAPAHWGELKDDNFTGPNQTSSNSTLPQLDVTRA) are extracellular. 3 N-linked (GlcNAc...) asparagine glycosylation sites follow: N10, N24, and N34. A helical membrane pass occupies residues 46 to 70 (ISVGLVLGAFILFAIVGNILVILSV). At 71-83 (ACNRHLRTPTNYF) the chain is on the cytoplasmic side. Residues 84–105 (IVNLAIADLLLSFTVLPFSATL) traverse the membrane as a helical segment. At 106–115 (EVLGYWVLGR) the chain is on the extracellular side. The chain crosses the membrane as a helical span at residues 116–141 (IFCDIWAAVDVLCCTASILSLCAISI). C118 and C195 form a disulfide bridge. At 142–161 (DRYIGVRYSLQYPTLVTRRK) the chain is on the cytoplasmic side. A helical transmembrane segment spans residues 162–182 (AILALLSVWVLSTVISIGPLL). Over 183-201 (GWKEPAPNDDKECGVTEEP) the chain is Extracellular. The helical transmembrane segment at 202–224 (FYALFSSLGSFYIPLAVILVMYC) threads the bilayer. The Cytoplasmic segment spans residues 225–295 (RVYIVAKRTT…FSREKKAAKT (71 aa)). Residue T264 is modified to Phosphothreonine. The helical transmembrane segment at 296–319 (LGIVVGMFILCWLPFFIALPLGSL) threads the bilayer. At 320-326 (FSTLKPP) the chain is on the extracellular side. Residues 327–351 (DAVFKVVFWLGYFNSCLNPIIYPCS) form a helical membrane-spanning segment. At 352-515 (SKEFKRAFMR…SNMPLAPGHF (164 aa)) the chain is on the cytoplasmic side. The S-palmitoyl cysteine moiety is linked to residue C365. The Nuclear localization signal signature appears at 368–378 (RGGRRRRRRRR). Disordered regions lie at residues 392–430 (GGSL…GYLG) and 474–515 (LGDP…PGHF). Polar residues-rich tracts occupy residues 410–424 (SCMS…SASP) and 484–498 (GDTS…TDLA).

Belongs to the G-protein coupled receptor 1 family. Adrenergic receptor subfamily. ADRA1B sub-subfamily. As to quaternary structure, homo- and heterooligomer. Heterooligomerizes with ADRA1B homooligomers in cardiac myocytes. Interacts with CAVIN4.

The protein resides in the nucleus membrane. The protein localises to the cell membrane. Its subcellular location is the cytoplasm. It localises to the membrane. It is found in the caveola. Functionally, this alpha-adrenergic receptor mediates its action by association with G proteins that activate a phosphatidylinositol-calcium second messenger system. Its effect is mediated by G(q) and G(11) proteins. Nuclear ADRA1A-ADRA1B heterooligomers regulate phenylephrine (PE)-stimulated ERK signaling in cardiac myocytes. This Rattus norvegicus (Rat) protein is Alpha-1B adrenergic receptor (Adra1b).